The chain runs to 125 residues: Large ribosomal subunit protein bL12 (125 aa).

Belongs to the bacterial ribosomal protein bL12 family. As to quaternary structure, homodimer. Part of the ribosomal stalk of the 50S ribosomal subunit. Forms a multimeric L10(L12)X complex, where L10 forms an elongated spine to which 2 to 4 L12 dimers bind in a sequential fashion. Binds GTP-bound translation factors.

Its function is as follows. Forms part of the ribosomal stalk which helps the ribosome interact with GTP-bound translation factors. Is thus essential for accurate translation. This Coprothermobacter proteolyticus (strain ATCC 35245 / DSM 5265 / OCM 4 / BT) protein is Large ribosomal subunit protein bL12.